A 341-amino-acid polypeptide reads, in one-letter code: MTEMFYDDDADLSIIQGRKVAIVGYGSQGHAHAQNLRDSGVEVVIALKDGSKSIAKAEDAGFTVKNVADAAEWADVIMILAPDQHQRSIFTESIKDKLTPGKALAFAHGFNIRFGYIQAPEGVDVILVAPKAPGHTVRREFEAGRGIPDIIAVEQDASGSAWDLAKSYAKAIGGTRAGVIKTTFTEETETDLFGEQSVLCGGVSQLIQYGFETLTEAGYQPQIAYFEVLHELKLIVDLMWEGGIAKQRWSVSDTAEYGDYVSGPRVITPEVKENMKAVLADIQSGAFAKRFIEDQDNGGVEFKELRAKAEQHPIEEVGRELRSLFSWQQQDADYVEGSAAR.

Residues 1–182 form the KARI N-terminal Rossmann domain; that stretch reads MTEMFYDDDA…GGTRAGVIKT (182 aa). Residues 25–28, K48, S51, S53, and 83–86 contribute to the NADP(+) site; these read YGSQ and DQHQ. H108 is a catalytic residue. Position 134 (G134) interacts with NADP(+). The region spanning 183 to 328 is the KARI C-terminal knotted domain; the sequence is TFTEETETDL…RELRSLFSWQ (146 aa). Mg(2+) is bound by residues D191, E195, E227, and E231. Residue S252 participates in substrate binding.

This sequence belongs to the ketol-acid reductoisomerase family. The cofactor is Mg(2+).

The enzyme catalyses (2R)-2,3-dihydroxy-3-methylbutanoate + NADP(+) = (2S)-2-acetolactate + NADPH + H(+). It catalyses the reaction (2R,3R)-2,3-dihydroxy-3-methylpentanoate + NADP(+) = (S)-2-ethyl-2-hydroxy-3-oxobutanoate + NADPH + H(+). It functions in the pathway amino-acid biosynthesis; L-isoleucine biosynthesis; L-isoleucine from 2-oxobutanoate: step 2/4. The protein operates within amino-acid biosynthesis; L-valine biosynthesis; L-valine from pyruvate: step 2/4. In terms of biological role, involved in the biosynthesis of branched-chain amino acids (BCAA). Catalyzes an alkyl-migration followed by a ketol-acid reduction of (S)-2-acetolactate (S2AL) to yield (R)-2,3-dihydroxy-isovalerate. In the isomerase reaction, S2AL is rearranged via a Mg-dependent methyl migration to produce 3-hydroxy-3-methyl-2-ketobutyrate (HMKB). In the reductase reaction, this 2-ketoacid undergoes a metal-dependent reduction by NADPH to yield (R)-2,3-dihydroxy-isovalerate. The polypeptide is Ketol-acid reductoisomerase (NADP(+)) (Pseudarthrobacter chlorophenolicus (strain ATCC 700700 / DSM 12829 / CIP 107037 / JCM 12360 / KCTC 9906 / NCIMB 13794 / A6) (Arthrobacter chlorophenolicus)).